Reading from the N-terminus, the 492-residue chain is UTP--glucose-1-phosphate uridylyltransferase (492 aa).

Residues 110–113, lysine 124, glutamine 183, and glycine 210 each bind UTP; that span reads LNGG. Substrate is bound at residue 112 to 113; the sequence is GG. Lysine 124 contributes to the Mg(2+) binding site. Residues histidine 211 and 239-241 contribute to the substrate site; that span reads NID. UTP-binding residues include aspartate 241 and lysine 379. Mg(2+) is bound at residue aspartate 241. Lysine 379 is an active-site residue. Residues 441–492 form an oligomerization region; it reads VLTVSGNVLFGKNVVLKGTVIILADEKSKICVPDGSVLEDNIIYGNLPIIDH.

Belongs to the UDPGP type 1 family. Homooctamer.

It carries out the reaction alpha-D-glucose 1-phosphate + UTP + H(+) = UDP-alpha-D-glucose + diphosphate. Plays a central role as a glucosyl donor in cellular metabolic pathways. The sequence is that of UTP--glucose-1-phosphate uridylyltransferase (UGP1) from Encephalitozoon cuniculi (strain GB-M1) (Microsporidian parasite).